A 194-amino-acid polypeptide reads, in one-letter code: MDFEQLLDKSLNKVREEIKTELSKSLDEAIKLLNEGHNKIVQEYSQRINELIVKTKEEIEGEKARLEVENKRTLLVEKEYWINKVYERVLGKIGEVVKTKEYKDAIENIISKEIKEIREEKVTIYCSPNDKLMIEKIVGNNKNVTVKTDEKMLGGIKIYFERSGLTRDFSLKLILDQVFDSMRGKISDMLFGGK.

The protein belongs to the V-ATPase E subunit family. Has multiple subunits with at least A(3), B(3), C, D, E, F, H, I and proteolipid K(x).

Its subcellular location is the cell membrane. In terms of biological role, component of the A-type ATP synthase that produces ATP from ADP in the presence of a proton gradient across the membrane. In Saccharolobus solfataricus (strain ATCC 35092 / DSM 1617 / JCM 11322 / P2) (Sulfolobus solfataricus), this protein is A-type ATP synthase subunit E.